The following is a 322-amino-acid chain: Gluconeogenesis factor (322 aa).

Belongs to the gluconeogenesis factor family.

It localises to the cytoplasm. Required for morphogenesis under gluconeogenic growth conditions. The sequence is that of Gluconeogenesis factor from Listeria innocua serovar 6a (strain ATCC BAA-680 / CLIP 11262).